We begin with the raw amino-acid sequence, 663 residues long: MNIKQKIDNLRQEIDNWNYRYYVIYQPIVSDFEFDKKLKELEKLEAQYPEYYDYYSPTQRIGNDINNNFAQINHIYPMLSLSNTYSWEGINDFYNRIKKILNENFVIACELKYDGVSISLIYESGLLLRAVTRGDGTTGDDVTTNIRTVKSIPLKLYGNNYPRFFEIRGEIVFPWAAFNKINKERIENSEPPFANPRNAAAGTLKTLNPQVVSQRNLDAYLYQLLGDNLSSDSHYENLQLAQGWGFKVSNIIKCCKTIDEIENFINYWGKWKKSLPFAVDGVVLKVDSIRQQSLLGRIAKSPRWAIAYKFQSETVKTTLHSVDFQVGRTGIITPIANLEPVLLSGTIVKRASLHNEDIINALDLHIGDQCYVEKGGEIIPKITGINKEARLTFGNKAVNFPKNCPACNTPLIRFQNETAYYCPNYTQCKPQIKGMITHFASRKAMNINVGEETIETFYRAGLVRDIADLYEIKIDDILQLKRWAEKSAINFVESVQQSKQVPYERVLYGLGIHFVGEVVAKRLAKAFPTIEQLSIANNEQLTTIDGIGNQIAQSVIQYFSNENNLQLIRRLKLYGLQLFTIQKIFIDNKLAGKTFIISGIFRKYSRDKYKELIENNGGKNVSSLSAKTDFILSGVNMGPVKLIKAQRFGIKIISEDEFLKMIE.

Residues 31–35 (DFEFD), 80–81 (SL), and E110 contribute to the NAD(+) site. The active-site N6-AMP-lysine intermediate is the K112. The NAD(+) site is built by R133, E170, K285, and K309. Zn(2+)-binding residues include C404, C407, C422, and C428. Residues 585–663 (FIDNKLAGKT…SEDEFLKMIE (79 aa)) enclose the BRCT domain.

Belongs to the NAD-dependent DNA ligase family. LigA subfamily. Mg(2+) is required as a cofactor. The cofactor is Mn(2+).

The enzyme catalyses NAD(+) + (deoxyribonucleotide)n-3'-hydroxyl + 5'-phospho-(deoxyribonucleotide)m = (deoxyribonucleotide)n+m + AMP + beta-nicotinamide D-nucleotide.. Functionally, DNA ligase that catalyzes the formation of phosphodiester linkages between 5'-phosphoryl and 3'-hydroxyl groups in double-stranded DNA using NAD as a coenzyme and as the energy source for the reaction. It is essential for DNA replication and repair of damaged DNA. This is DNA ligase from Azobacteroides pseudotrichonymphae genomovar. CFP2.